Consider the following 73-residue polypeptide: Structural DNA-binding protein p10 (73 aa).

A disordered region spans residues 1 to 35 (MPTKAGTKSTAHKKTTTKGPSKSPKGKTHATALHQ).

Belongs to the asfivirus P10 family.

It is found in the virion. In terms of biological role, may play a role in genome packaging through direct interaction with viral DNA. Binds to ssDNA and dsDNA with the same apparent affinity in vitro. The polypeptide is Structural DNA-binding protein p10 (African swine fever virus (isolate Tick/Malawi/Lil 20-1/1983) (ASFV)).